An 87-amino-acid polypeptide reads, in one-letter code: MAHKKGTGSTRNGRDSNAQRLGVKRYGGQTVTAGSIIVRQRGTQVHPGNNVGRGKDDTLFALIDGVVKFEHKTRSRRKVSVYPATAE.

The tract at residues 1–23 (MAHKKGTGSTRNGRDSNAQRLGV) is disordered. Residues 7 to 19 (TGSTRNGRDSNAQ) are compositionally biased toward polar residues.

The protein belongs to the bacterial ribosomal protein bL27 family.

The sequence is that of Large ribosomal subunit protein bL27 (rpmA) from Synechocystis sp. (strain ATCC 27184 / PCC 6803 / Kazusa).